Reading from the N-terminus, the 1170-residue chain is PAN2-PAN3 deadenylation complex catalytic subunit PAN2 (1170 aa).

2 WD repeats span residues 104–144 (ENMK…IIKQ) and 280–319 (NISS…HFTD). The linker stretch occupies residues 319 to 458 (DMAIPIELPE…DPNEIESLKP (140 aa)). Residues 399-459 (RRNQVEDTRN…PNEIESLKPE (61 aa)) are disordered. A compositionally biased stretch (acidic residues) spans 443-452 (VDQEPEDPNE). In terms of domain architecture, USP spans 459 to 846 (EAPPLYRNLE…MPAVLLFQIK (388 aa)). In terms of domain architecture, Exonuclease spans 894-1067 (VALDTEFVSL…EDARTALKLY (174 aa)). A divalent metal cation is bound by residues D897, E899, D1006, and D1059. A disordered region spans residues 1094-1170 (NFKPPRREDR…PSKASSPLPK (77 aa)). The span at 1098 to 1108 (PRREDREKELQ) shows a compositional bias: basic and acidic residues. The span at 1109 to 1119 (RQSTPPNSTAP) shows a compositional bias: polar residues.

This sequence belongs to the peptidase C19 family. PAN2 subfamily. As to quaternary structure, forms a heterotrimer with an asymmetric homodimer of the regulatory subunit PAN3 to form the poly(A)-nuclease (PAN) deadenylation complex. A divalent metal cation serves as cofactor.

It localises to the cytoplasm. It catalyses the reaction Exonucleolytic cleavage of poly(A) to 5'-AMP.. Its activity is regulated as follows. Positively regulated by the regulatory subunit PAN3. In terms of biological role, catalytic subunit of the poly(A)-nuclease (PAN) deadenylation complex, one of two cytoplasmic mRNA deadenylases involved in mRNA turnover. PAN specifically shortens poly(A) tails of RNA and the activity is stimulated by poly(A)-binding protein PAB1. PAN deadenylation is followed by rapid degradation of the shortened mRNA tails by the CCR4-NOT complex. Deadenylated mRNAs are then degraded by two alternative mechanisms, namely exosome-mediated 3'-5' exonucleolytic degradation, or deadenylation-dependent mRNA decaping and subsequent 5'-3' exonucleolytic degradation by XRN1. May also be involved in post-transcriptional maturation of mRNA poly(A) tails. The sequence is that of PAN2-PAN3 deadenylation complex catalytic subunit PAN2 from Chaetomium thermophilum (strain DSM 1495 / CBS 144.50 / IMI 039719) (Thermochaetoides thermophila).